We begin with the raw amino-acid sequence, 430 residues long: Sesquiterpene synthase 15 (430 aa).

Positions 182, 186, and 335 each coordinate Mg(2+). Positions 182–186 (DDIYD) match the DDXXD motif motif.

This sequence belongs to the terpene synthase family. Tpsa subfamily. The cofactor is Mg(2+). Requires Mn(2+) as cofactor.

The protein operates within secondary metabolite biosynthesis; terpenoid biosynthesis. In terms of biological role, sesquiterpene synthase involved in the biosynthesis of volatile compounds. No activity detected with geranyl diphosphate (GPP) and farnesyl diphosphate (FPP) as substrates. The chain is Sesquiterpene synthase 15 from Solanum lycopersicum (Tomato).